Reading from the N-terminus, the 484-residue chain is Sulfoacetaldehyde dehydrogenase (484 aa).

NAD(+)-binding positions include 105-110, glycine 188, and glycine 206; that span reads LTPVTN. Residue cysteine 239 is the Nucleophile of the active site. NAD(+)-binding residues include glutamate 332 and leucine 412.

This sequence belongs to the aldehyde dehydrogenase family.

The catalysed reaction is sulfoacetaldehyde + NAD(+) + CoA = sulfoacetyl-CoA + NADH + H(+). Part of a variant of the sulfo-TK pathway, a D-sulfoquinovose degradation pathway that produces sulfoacetate. Catalyzes the oxidation of sulfoacetaldehyde (SA) to sulfoacetyl-coenzyme A (sulfoacetyl-CoA). Is highly specific for NAD(+), with only residual (1%) activity with NADP(+). Cannot use acetaldehyde. The sequence is that of Sulfoacetaldehyde dehydrogenase from Acholeplasma sp.